We begin with the raw amino-acid sequence, 89 residues long: Small ribosomal subunit protein uS15 (89 aa).

The protein belongs to the universal ribosomal protein uS15 family. In terms of assembly, part of the 30S ribosomal subunit. Forms a bridge to the 50S subunit in the 70S ribosome, contacting the 23S rRNA.

Its function is as follows. One of the primary rRNA binding proteins, it binds directly to 16S rRNA where it helps nucleate assembly of the platform of the 30S subunit by binding and bridging several RNA helices of the 16S rRNA. Forms an intersubunit bridge (bridge B4) with the 23S rRNA of the 50S subunit in the ribosome. The sequence is that of Small ribosomal subunit protein uS15 from Bartonella henselae (strain ATCC 49882 / DSM 28221 / CCUG 30454 / Houston 1) (Rochalimaea henselae).